The chain runs to 258 residues: Protein CHAPERONE-LIKE PROTEIN OF POR1, chloroplastic (258 aa).

The N-terminal 48 residues, 1 to 48, are a transit peptide targeting the chloroplast; it reads MSSSLLLSGSTVSSSFIAPSKPSLVRNSSKTSLLPFRNVSRSFKTVKC. An N-acetylthreonine modification is found at Thr-49. Positions 67–122 are J-like domain required for holdase chaperone activity; that stretch reads WDPYKRLGVSPYASEEEIWASRNFLLQQYAGHERSEESIEGAFEKLLMSSFIRRKK. 3 helical membrane-spanning segments follow: residues 162–182, 207–227, and 237–257; these read FLFA…GPAF, LIGI…IPMI, and TLEL…CTFL.

Belongs to the chaperone-like protein of POR1 protein family. In terms of assembly, interacts with PORB in chloroplast. Interacts with PORA during plastid import. Expressed ubiquitously with higher levels in young leaves, flowers, and the root elongation zone.

The protein resides in the mitochondrion membrane. It localises to the plastid. The protein localises to the chloroplast envelope. It is found in the chloroplast thylakoid membrane. Its function is as follows. Essential protein required during embryogenesis. Exhibits holdase chaperone activity involved in the stabilization of NADPH:protochlorophyllide oxidoreductase (POR) proteins against photooxidative stress during POR proteins import into chloroplasts. Required for chloroplast biogenesis and development. When expressed in yeast, triggers mitochondria-mediated cell death associated with the loss of mitochondrial membrane potential. The sequence is that of Protein CHAPERONE-LIKE PROTEIN OF POR1, chloroplastic from Arabidopsis thaliana (Mouse-ear cress).